We begin with the raw amino-acid sequence, 87 residues long: Glutaredoxin (87 aa).

One can recognise a Glutaredoxin domain in the interval 1-87 (MFKVYGYDSN…GFDQLREYFK (87 aa)). A disulfide bond links cysteine 14 and cysteine 17.

The protein belongs to the glutaredoxin family.

Serves as a reducing agent for the phage-induced ribonucleotide reductase, but not for the bacterial ones. This specificity may be the result of sequence differences around the redox-active disulfide bond. The oxidized form accepts electrons from bacterial glutathione and will, in turn, reduce other small disulfides. Can also be reduced by NADPH and by bacterial thioredoxin reductase. This chain is Glutaredoxin (NRDC), found in Enterobacteria phage T4 (Bacteriophage T4).